Consider the following 108-residue polypeptide: Nucleoid-associated protein Avin_19840 (108 aa).

It belongs to the YbaB/EbfC family. Homodimer.

It is found in the cytoplasm. It localises to the nucleoid. Binds to DNA and alters its conformation. May be involved in regulation of gene expression, nucleoid organization and DNA protection. The protein is Nucleoid-associated protein Avin_19840 of Azotobacter vinelandii (strain DJ / ATCC BAA-1303).